The primary structure comprises 278 residues: Large ribosomal subunit protein uL2 (278 aa).

3 disordered regions span residues M1–D20, T25–G57, and V224–R278. Basic residues-rich tracts occupy residues A45–G57 and V269–R278.

It belongs to the universal ribosomal protein uL2 family. As to quaternary structure, part of the 50S ribosomal subunit. Forms a bridge to the 30S subunit in the 70S ribosome.

In terms of biological role, one of the primary rRNA binding proteins. Required for association of the 30S and 50S subunits to form the 70S ribosome, for tRNA binding and peptide bond formation. It has been suggested to have peptidyltransferase activity; this is somewhat controversial. Makes several contacts with the 16S rRNA in the 70S ribosome. The chain is Large ribosomal subunit protein uL2 from Nocardia farcinica (strain IFM 10152).